The primary structure comprises 103 residues: Co-chaperonin GroES (103 aa).

This sequence belongs to the GroES chaperonin family. As to quaternary structure, heptamer of 7 subunits arranged in a ring. Interacts with the chaperonin GroEL.

It localises to the cytoplasm. Together with the chaperonin GroEL, plays an essential role in assisting protein folding. The GroEL-GroES system forms a nano-cage that allows encapsulation of the non-native substrate proteins and provides a physical environment optimized to promote and accelerate protein folding. GroES binds to the apical surface of the GroEL ring, thereby capping the opening of the GroEL channel. The polypeptide is Co-chaperonin GroES (Synechococcus sp. (strain CC9902)).